Consider the following 126-residue polypeptide: Acidic phospholipase A2 S1E6-b (126 aa).

An N-terminal signal peptide occupies residues 1–3 (VEG). 7 disulfide bridges follow: cysteine 29/cysteine 119, cysteine 31/cysteine 47, cysteine 46/cysteine 98, cysteine 52/cysteine 126, cysteine 53/cysteine 91, cysteine 60/cysteine 84, and cysteine 78/cysteine 89. Ca(2+) contacts are provided by tyrosine 30, glycine 32, and glycine 34. Histidine 50 is an active-site residue. Aspartate 51 is a Ca(2+) binding site. Aspartate 92 is a catalytic residue.

As to quaternary structure, homodimer. Ca(2+) is required as a cofactor. Expressed by the venom gland.

It localises to the secreted. The catalysed reaction is a 1,2-diacyl-sn-glycero-3-phosphocholine + H2O = a 1-acyl-sn-glycero-3-phosphocholine + a fatty acid + H(+). Its function is as follows. Snake venom phospholipase that inhibits ADP-induced platelet aggregation. PLA2 catalyzes the calcium-dependent hydrolysis of the 2-acyl groups in 3-sn-phosphoglycerides. The chain is Acidic phospholipase A2 S1E6-b from Calloselasma rhodostoma (Malayan pit viper).